The sequence spans 285 residues: RNase adapter protein RapZ (285 aa).

8–15 (GRSGSGKS) contributes to the ATP binding site. Residue 56-59 (DVRN) participates in GTP binding. The tract at residues 266–285 (RSRGKNVQSRHRTLEKRKPS) is RNA-binding.

It belongs to the RapZ-like family. RapZ subfamily. Homotrimer.

Modulates the synthesis of GlmS, by affecting the processing and stability of the regulatory small RNA GlmZ. When glucosamine-6-phosphate (GlcN6P) concentrations are high in the cell, RapZ binds GlmZ and targets it to cleavage by RNase E. Consequently, GlmZ is inactivated and unable to activate GlmS synthesis. Under low GlcN6P concentrations, RapZ is sequestered and inactivated by an other regulatory small RNA, GlmY, preventing GlmZ degradation and leading to synthesis of GlmS. The chain is RNase adapter protein RapZ from Pectobacterium atrosepticum (strain SCRI 1043 / ATCC BAA-672) (Erwinia carotovora subsp. atroseptica).